Reading from the N-terminus, the 546-residue chain is Chaperonin GroEL (546 aa).

Residues 30-33, lysine 51, 87-91, glycine 415, 479-481, and aspartate 495 each bind ATP; these read TLGP, DGTTT, and NAA.

The protein belongs to the chaperonin (HSP60) family. As to quaternary structure, forms a cylinder of 14 subunits composed of two heptameric rings stacked back-to-back. Interacts with the co-chaperonin GroES.

The protein localises to the cytoplasm. The catalysed reaction is ATP + H2O + a folded polypeptide = ADP + phosphate + an unfolded polypeptide.. Functionally, together with its co-chaperonin GroES, plays an essential role in assisting protein folding. The GroEL-GroES system forms a nano-cage that allows encapsulation of the non-native substrate proteins and provides a physical environment optimized to promote and accelerate protein folding. This is Chaperonin GroEL from Pseudomonas putida (strain ATCC 47054 / DSM 6125 / CFBP 8728 / NCIMB 11950 / KT2440).